We begin with the raw amino-acid sequence, 540 residues long: Sensory neuron membrane protein 1 (540 aa).

Topologically, residues 1-105 are cytoplasmic; that stretch reads MRTDDPVIGN…WIFRPDLSKP (105 aa). The chain crosses the membrane as a helical span at residues 106-126; sequence LTGDEMITIPHPLILGALLMV. Over 127–436 the chain is Extracellular; it reads QRDREAMMPL…YTLFLGLRFN (310 aa). N-linked (GlcNAc...) asparagine glycosylation is found at Asn-193 and Asn-206. 3 disulfides stabilise this stretch: Cys-245/Cys-310, Cys-274/Cys-330, and Cys-312/Cys-319. The N-linked (GlcNAc...) asparagine glycan is linked to Asn-418. Residues 437–457 traverse the membrane as a helical segment; that stretch reads TAVKWLTIIIGTIGTIVGGFM. Residues 458-540 are Cytoplasmic-facing; the sequence is HYKRTTKMVN…VTVTEMQERY (83 aa).

The protein belongs to the CD36 family.

The protein localises to the cell membrane. Plays an olfactory role that is not restricted to pheromone sensitivity. The protein is Sensory neuron membrane protein 1 of Aedes aegypti (Yellowfever mosquito).